A 476-amino-acid chain; its full sequence is MNSAVEAQLAELGIEGYLKQHQYKSLLRFLTCGSVDDGKSTLIGRLLHDSKQIYEDQLAAVHSDSQRVGTTGEKPDLALLVDGLQAEREQGITIDVAYRYFSTQKRKFIIADTPGHEQYTRNMATGASTCDLAVILVDARKGILDQTRRHSFISNLLGLKHFVVAINKMDLVDYSQARFEEIRDEYLKFSENLTGDIDIQIIPISALEGDNVVDKGQNLNWFEGPSLLELLETVDVDYEKGAGEFRFPVQYVNRPNLDFRGFAGTVSSGSVKVGDAIKALPSGKTSTVARIVTFDGDIEEAQAGLAVTLTLNDEIDISRGDLIVLENAQVQTTNHLLADVVWMTEQPLQPGRDYDIKIAGKKTVGHVESIRHQYDINNLSTHGAAELPLNGIGLCEWSLNESVALDNYQDCADTGGFIIIDRLTNVTVGAGMVKESLTELERGLADVSAFELELNALVRKHFPHWEAKDLSQLLKK.

A tr-type G domain is found at 24–239 (KSLLRFLTCG…LLETVDVDYE (216 aa)). A G1 region spans residues 33 to 40 (GSVDDGKS). Residue 33-40 (GSVDDGKS) coordinates GTP. The tract at residues 91 to 95 (GITID) is G2. The segment at 112 to 115 (DTPG) is G3. GTP is bound by residues 112–116 (DTPGH) and 167–170 (NKMD). Residues 167-170 (NKMD) form a G4 region. A G5 region spans residues 205-207 (SAL).

The protein belongs to the TRAFAC class translation factor GTPase superfamily. Classic translation factor GTPase family. CysN/NodQ subfamily. In terms of assembly, heterodimer composed of CysD, the smaller subunit, and CysN.

It catalyses the reaction sulfate + ATP + H(+) = adenosine 5'-phosphosulfate + diphosphate. It participates in sulfur metabolism; hydrogen sulfide biosynthesis; sulfite from sulfate: step 1/3. With CysD forms the ATP sulfurylase (ATPS) that catalyzes the adenylation of sulfate producing adenosine 5'-phosphosulfate (APS) and diphosphate, the first enzymatic step in sulfur assimilation pathway. APS synthesis involves the formation of a high-energy phosphoric-sulfuric acid anhydride bond driven by GTP hydrolysis by CysN coupled to ATP hydrolysis by CysD. The sequence is that of Sulfate adenylyltransferase subunit 1 from Vibrio parahaemolyticus serotype O3:K6 (strain RIMD 2210633).